A 125-amino-acid polypeptide reads, in one-letter code: Holo-[acyl-carrier-protein] synthase (125 aa).

Mg(2+) is bound by residues aspartate 8 and glutamate 57.

The protein belongs to the P-Pant transferase superfamily. AcpS family. Requires Mg(2+) as cofactor.

Its subcellular location is the cytoplasm. The enzyme catalyses apo-[ACP] + CoA = holo-[ACP] + adenosine 3',5'-bisphosphate + H(+). In terms of biological role, transfers the 4'-phosphopantetheine moiety from coenzyme A to a Ser of acyl-carrier-protein. The sequence is that of Holo-[acyl-carrier-protein] synthase from Blochmanniella floridana.